A 60-amino-acid chain; its full sequence is Homeobox protein engrailed-like B (60 aa).

Residues 1-41 constitute a DNA-binding region (homeobox); sequence VEQLQRLKSEFGASRYLTEARRQALAQELRLNEAQIKIWFQ.

This sequence belongs to the engrailed homeobox family.

It is found in the nucleus. The protein is Homeobox protein engrailed-like B of Myxine glutinosa (Atlantic hagfish).